We begin with the raw amino-acid sequence, 173 residues long: Acetyl-CoA decarbonylase/synthase complex subunit epsilon (173 aa).

Belongs to the CdhB family. As to quaternary structure, heterotetramer of two alpha and two epsilon subunits. The ACDS complex is made up of alpha, epsilon, beta, gamma and delta subunits with a probable stoichiometry of (alpha(2)epsilon(2))(4)-beta(8)-(gamma(1)delta(1))(8).

It participates in one-carbon metabolism; methanogenesis from acetate. Its function is as follows. Part of a complex that catalyzes the reversible cleavage of acetyl-CoA, allowing growth on acetate as sole source of carbon and energy. The alpha-epsilon subcomponent functions as a carbon monoxide dehydrogenase. The precise role of the epsilon subunit is unclear; it may have a stabilizing role within the alpha(2)epsilon(2) component and/or be involved in electron transfer to FAD during a potential FAD-mediated CO oxidation. The polypeptide is Acetyl-CoA decarbonylase/synthase complex subunit epsilon (Methanothermobacter thermautotrophicus (strain ATCC 29096 / DSM 1053 / JCM 10044 / NBRC 100330 / Delta H) (Methanobacterium thermoautotrophicum)).